A 181-amino-acid polypeptide reads, in one-letter code: Protein Syd (181 aa).

This sequence belongs to the Syd family.

It localises to the cell inner membrane. Its function is as follows. Interacts with the SecY protein in vivo. May bind preferentially to an uncomplexed state of SecY, thus functioning either as a chelating agent for excess SecY in the cell or as a regulatory factor that negatively controls the translocase function. This chain is Protein Syd, found in Alteromonas mediterranea (strain DSM 17117 / CIP 110805 / LMG 28347 / Deep ecotype).